The sequence spans 202 residues: MSEFEYPQGYGLIAGVDEVGRGPLVGAVVTAAVILDPNNPISGLADSKKLSEKKRLVLAAEIKEKALAWSLGRAEAEEIDELNILHATMLAMRRAVKSLKILPHLVLVDGNRVPELDMPAQAIIKGDGKVAEISAASILAKVARDQEMETLDKQFPQYEFAKHKGYPTKVHLEKLMRFGALPQHRRSFAPVRKAIEEFNRTQ.

An RNase H type-2 domain is found at Gly-11–Arg-200. A divalent metal cation contacts are provided by Asp-17, Glu-18, and Asp-109.

Belongs to the RNase HII family. It depends on Mn(2+) as a cofactor. The cofactor is Mg(2+).

The protein localises to the cytoplasm. The enzyme catalyses Endonucleolytic cleavage to 5'-phosphomonoester.. Endonuclease that specifically degrades the RNA of RNA-DNA hybrids. This Actinobacillus succinogenes (strain ATCC 55618 / DSM 22257 / CCUG 43843 / 130Z) protein is Ribonuclease HII.